The primary structure comprises 239 residues: Ribosomal RNA small subunit methyltransferase G (239 aa).

S-adenosyl-L-methionine is bound by residues G78, F83, 129 to 130 (AE), and R148.

The protein belongs to the methyltransferase superfamily. RNA methyltransferase RsmG family.

Its subcellular location is the cytoplasm. Functionally, specifically methylates the N7 position of a guanine in 16S rRNA. This chain is Ribosomal RNA small subunit methyltransferase G, found in Clostridium botulinum (strain Okra / Type B1).